The following is a 90-amino-acid chain: MQRIIFCEYEKRDTEGLDFVPYPGELGQKIFACIGKVGWAAWLAHQTMLINENRLSPRNPSHRAFLEEELNKFLFERSAAKPEGYIEPDA.

The protein belongs to the Fe(2+)-trafficking protein family.

In terms of biological role, could be a mediator in iron transactions between iron acquisition and iron-requiring processes, such as synthesis and/or repair of Fe-S clusters in biosynthetic enzymes. In Xylella fastidiosa (strain M23), this protein is Probable Fe(2+)-trafficking protein.